We begin with the raw amino-acid sequence, 366 residues long: Leucine dehydrogenase (366 aa).

Residue lysine 80 is part of the active site. 180–186 (GVGHVAY) contributes to the NAD(+) binding site.

This sequence belongs to the Glu/Leu/Phe/Val dehydrogenases family. Homooctamer.

It catalyses the reaction L-leucine + NAD(+) + H2O = 4-methyl-2-oxopentanoate + NH4(+) + NADH + H(+). It participates in amino-acid degradation; L-leucine degradation; 4-methyl-2-oxopentanoate from L-leucine (dehydrogenase route): step 1/1. Inhibited by pyridoxal phosphate. Catalyzes the reversible deamination of L-leucine to 4-methyl-2-oxopentanoate. Exhibits the highest activity with L-leucine as substrate, but can also use other L-amino acids such as L-isoleucine, L-valine and L-2-aminovaleric acid. All of the oxo analogs of the amino acid substrates serve as good substrates for the reverse reaction. The polypeptide is Leucine dehydrogenase (ldh) (Thermoactinomyces intermedius).